Reading from the N-terminus, the 167-residue chain is Lipoprotein signal peptidase (167 aa).

Helical transmembrane passes span 12 to 32, 68 to 88, and 99 to 119; these read WLWL…AVVK, WQRW…IHWL, and GIAY…RLVL. Residues Asp124 and Asp142 contribute to the active site. The chain crosses the membrane as a helical span at residues 137 to 157; that stretch reads AFNLADSFIFIGAAMIVLDGF.

It belongs to the peptidase A8 family.

The protein localises to the cell inner membrane. The catalysed reaction is Release of signal peptides from bacterial membrane prolipoproteins. Hydrolyzes -Xaa-Yaa-Zaa-|-(S,diacylglyceryl)Cys-, in which Xaa is hydrophobic (preferably Leu), and Yaa (Ala or Ser) and Zaa (Gly or Ala) have small, neutral side chains.. It participates in protein modification; lipoprotein biosynthesis (signal peptide cleavage). Functionally, this protein specifically catalyzes the removal of signal peptides from prolipoproteins. This Aeromonas hydrophila subsp. hydrophila (strain ATCC 7966 / DSM 30187 / BCRC 13018 / CCUG 14551 / JCM 1027 / KCTC 2358 / NCIMB 9240 / NCTC 8049) protein is Lipoprotein signal peptidase.